The chain runs to 644 residues: Chaperone protein DnaK (644 aa).

Residue threonine 199 is modified to Phosphothreonine; by autocatalysis. The tract at residues 589–644 (QALAEASHKLAEKMYSQGQGPQAGPGEEPSGQSGGTEKPVEGEVVDAEFEEVKNKK) is disordered. The span at 604 to 619 (SQGQGPQAGPGEEPSG) shows a compositional bias: low complexity.

Belongs to the heat shock protein 70 family.

Functionally, acts as a chaperone. This chain is Chaperone protein DnaK, found in Nitrosospira multiformis (strain ATCC 25196 / NCIMB 11849 / C 71).